The primary structure comprises 520 residues: Hydroxymethylglutaryl-CoA synthase, cytoplasmic (520 aa).

Ser-4 carries the post-translational modification Phosphoserine. Ala-44 is a binding site for (3S)-3-hydroxy-3-methylglutaryl-CoA. 44–46 (AGK) contacts CoA. An N6-acetyllysine modification is found at Lys-46. The active-site Proton donor/acceptor is Glu-95. (3S)-3-hydroxy-3-methylglutaryl-CoA is bound by residues Cys-129, Asn-167, Thr-171, Ser-221, and His-264. The active-site Acyl-thioester intermediate is Cys-129. Asn-167 contributes to the CoA binding site. Position 221 (Ser-221) interacts with CoA. The active-site Proton donor/acceptor is the His-264. CoA-binding residues include Lys-269 and Lys-273. Lys-273, Asn-343, and Ser-377 together coordinate (3S)-3-hydroxy-3-methylglutaryl-CoA. Lys-273 is modified (N6-acetyllysine). Thr-476 carries the phosphothreonine modification. A disordered region spans residues 492–520 (HIPSPAKKVPRLPATAAEPEAAVISNGEH). Ser-495 and Ser-516 each carry phosphoserine.

The protein belongs to the thiolase-like superfamily. HMG-CoA synthase family. Homodimer.

The protein localises to the cytoplasm. It catalyses the reaction acetoacetyl-CoA + acetyl-CoA + H2O = (3S)-3-hydroxy-3-methylglutaryl-CoA + CoA + H(+). The protein operates within metabolic intermediate biosynthesis; (R)-mevalonate biosynthesis; (R)-mevalonate from acetyl-CoA: step 2/3. Functionally, catalyzes the condensation of acetyl-CoA with acetoacetyl-CoA to form HMG-CoA, which is converted by HMG-CoA reductase (HMGCR) into mevalonate, a precursor for cholesterol synthesis. The chain is Hydroxymethylglutaryl-CoA synthase, cytoplasmic from Pongo abelii (Sumatran orangutan).